Consider the following 187-residue polypeptide: Cytochrome b-245 chaperone 1 (187 aa).

A helical transmembrane segment spans residues 20–42 (GIRSWSLLVGILSTGLAAAYYSG). Residues 167 to 187 (ESPSERSQSSDSEPDGPGGQS) are disordered. A phosphoserine mark is found at S168 and S170.

It belongs to the CYBC1 family. In terms of assembly, interacts with CYBB; CYBC1 may act as a chaperone stabilizing Cytochrome b-245 heterodimer.

The protein resides in the endoplasmic reticulum membrane. In terms of biological role, functions as a chaperone necessary for a stable expression of the CYBA and CYBB subunits of the cytochrome b-245 heterodimer. Controls the phagocyte respiratory burst and is essential for innate immunity. The protein is Cytochrome b-245 chaperone 1 of Rattus norvegicus (Rat).